The following is a 781-amino-acid chain: Protein argonaute (781 aa).

A PAZ domain is found at 110–194; the sequence is SMNELLTERR…RHNDYCNSVM (85 aa). The Piwi domain maps to 436–760; sequence LVVIVIPGPK…LSKFCGEVLR (325 aa).

The protein belongs to the argonaute family. Ago subfamily. In terms of assembly, interacts with miR2. Highly specific binding to the mRNA m7G-cap. May be a component of the RNA-induced silencing complex (RISC), a sequence-specific, multicomponent nuclease that destroys or silences messenger RNAs homologous to the silencing trigger.

Its subcellular location is the cytoplasm. Its function is as follows. Plays an essential role in growth and, with Dicer, also involved in microRNA (miRNA)-mediated translational repression. The RNA interference pathway is implicated in antigenic variation having a role in regulation of variant-specific surface protein (VSP)-coding gene expression. Several VSP genes are transcribed but only transcripts encoding the VSP to be expressed accumulate. Antisense RNAs corresponding to the silenced VSP genes are detected. The chain is Protein argonaute from Giardia intestinalis (Giardia lamblia).